We begin with the raw amino-acid sequence, 230 residues long: Demethylmenaquinone methyltransferase (230 aa).

S-adenosyl-L-methionine-binding positions include Thr-62, Asp-80, 100–101 (DG), and Ser-117.

This sequence belongs to the class I-like SAM-binding methyltransferase superfamily. MenG/UbiE family.

It catalyses the reaction a 2-demethylmenaquinol + S-adenosyl-L-methionine = a menaquinol + S-adenosyl-L-homocysteine + H(+). It functions in the pathway quinol/quinone metabolism; menaquinone biosynthesis; menaquinol from 1,4-dihydroxy-2-naphthoate: step 2/2. Functionally, methyltransferase required for the conversion of demethylmenaquinol (DMKH2) to menaquinol (MKH2). In Corynebacterium glutamicum (strain R), this protein is Demethylmenaquinone methyltransferase.